A 249-amino-acid chain; its full sequence is NAD-dependent protein deacylase 2 (249 aa).

Positions Met1–Arg240 constitute a Deacetylase sirtuin-type domain. Gly18 to Trp37 is an NAD(+) binding site. Substrate contacts are provided by Tyr62 and Arg65. NAD(+) is bound at residue Gln96 to Asp99. The active-site Proton acceptor is His114. Residues Cys122, Cys125, Cys142, and Cys145 each coordinate Zn(2+). NAD(+) is bound by residues Gly182–Ser184, Asn208–Glu210, and Ala226.

Belongs to the sirtuin family. Class III subfamily. Zn(2+) serves as cofactor.

The protein resides in the cytoplasm. It carries out the reaction N(6)-acetyl-L-lysyl-[protein] + NAD(+) + H2O = 2''-O-acetyl-ADP-D-ribose + nicotinamide + L-lysyl-[protein]. The enzyme catalyses N(6)-succinyl-L-lysyl-[protein] + NAD(+) + H2O = 2''-O-succinyl-ADP-D-ribose + nicotinamide + L-lysyl-[protein]. Its function is as follows. NAD-dependent lysine deacetylase and desuccinylase that specifically removes acetyl and succinyl groups on target proteins. Modulates the activities of several proteins which are inactive in their acylated form. Deacetylates the N-terminal lysine residue of Alba, the major archaeal chromatin protein and that, in turn, increases Alba's DNA binding affinity, thereby repressing transcription. This Pyrobaculum aerophilum (strain ATCC 51768 / DSM 7523 / JCM 9630 / CIP 104966 / NBRC 100827 / IM2) protein is NAD-dependent protein deacylase 2.